We begin with the raw amino-acid sequence, 217 residues long: MTTPYPRSDERRRMVDLQIAGRGIRDPRVLAAMAEVPRHLFIPPPYDRDAYADTPLPIGNDQTISQPYIVALMTELLHPCPEDRVLEIGAGSGYQAAILARLAAKVVTIERLGAVAAQARANLAAVGAENVEVIEGDGTFGYPLSAPYDGILVTAASPEIPQPLTEQLADKGRLVVPVGGRAMQDIVVLERDGSRYREERIEGVRFVPLIGKYGWEN.

Residue serine 65 is part of the active site.

This sequence belongs to the methyltransferase superfamily. L-isoaspartyl/D-aspartyl protein methyltransferase family.

The protein resides in the cytoplasm. It catalyses the reaction [protein]-L-isoaspartate + S-adenosyl-L-methionine = [protein]-L-isoaspartate alpha-methyl ester + S-adenosyl-L-homocysteine. In terms of biological role, catalyzes the methyl esterification of L-isoaspartyl residues in peptides and proteins that result from spontaneous decomposition of normal L-aspartyl and L-asparaginyl residues. It plays a role in the repair and/or degradation of damaged proteins. This is Protein-L-isoaspartate O-methyltransferase from Methanoregula boonei (strain DSM 21154 / JCM 14090 / 6A8).